The sequence spans 312 residues: Glycine--tRNA ligase alpha subunit (312 aa).

It belongs to the class-II aminoacyl-tRNA synthetase family. In terms of assembly, tetramer of two alpha and two beta subunits.

Its subcellular location is the cytoplasm. It carries out the reaction tRNA(Gly) + glycine + ATP = glycyl-tRNA(Gly) + AMP + diphosphate. The chain is Glycine--tRNA ligase alpha subunit (glyQ) from Buchnera aphidicola subsp. Acyrthosiphon pisum (strain APS) (Acyrthosiphon pisum symbiotic bacterium).